Reading from the N-terminus, the 93-residue chain is Putative membrane protein insertion efficiency factor (93 aa).

Belongs to the UPF0161 family.

It is found in the cell inner membrane. Could be involved in insertion of integral membrane proteins into the membrane. In Cupriavidus taiwanensis (strain DSM 17343 / BCRC 17206 / CCUG 44338 / CIP 107171 / LMG 19424 / R1) (Ralstonia taiwanensis (strain LMG 19424)), this protein is Putative membrane protein insertion efficiency factor.